The sequence spans 701 residues: DNA ligase (701 aa).

NAD(+) is bound by residues 50–54 (DYEYD), 99–100 (SL), and glutamate 130. Lysine 132 serves as the catalytic N6-AMP-lysine intermediate. NAD(+)-binding residues include arginine 153, glutamate 187, lysine 301, and lysine 325. The Zn(2+) site is built by cysteine 419, cysteine 422, cysteine 437, and cysteine 442. The 76-residue stretch at 626 to 701 (NEHQKYMNKT…EIITEPFWDN (76 aa)) folds into the BRCT domain.

The protein belongs to the NAD-dependent DNA ligase family. LigA subfamily. The cofactor is Mg(2+). Requires Mn(2+) as cofactor.

It carries out the reaction NAD(+) + (deoxyribonucleotide)n-3'-hydroxyl + 5'-phospho-(deoxyribonucleotide)m = (deoxyribonucleotide)n+m + AMP + beta-nicotinamide D-nucleotide.. Functionally, DNA ligase that catalyzes the formation of phosphodiester linkages between 5'-phosphoryl and 3'-hydroxyl groups in double-stranded DNA using NAD as a coenzyme and as the energy source for the reaction. It is essential for DNA replication and repair of damaged DNA. The sequence is that of DNA ligase from Malacoplasma penetrans (strain HF-2) (Mycoplasma penetrans).